The primary structure comprises 693 residues: Heat shock protein homolog SSE1 (693 aa).

A disordered region spans residues 665-693 (LAEKLAAQRKAESEKKESKADAEGDVELD). The segment covering 673–686 (RKAESEKKESKADA) has biased composition (basic and acidic residues).

This sequence belongs to the heat shock protein 70 family.

It is found in the cytoplasm. This Lachancea kluyveri (strain ATCC 58438 / CBS 3082 / BCRC 21498 / NBRC 1685 / JCM 7257 / NCYC 543 / NRRL Y-12651) (Yeast) protein is Heat shock protein homolog SSE1 (SSE1).